Here is a 294-residue protein sequence, read N- to C-terminus: 1D-myo-inositol 2-acetamido-2-deoxy-alpha-D-glucopyranoside deacetylase (294 aa).

Zn(2+)-binding residues include H15, D18, and H150.

This sequence belongs to the MshB deacetylase family. Zn(2+) serves as cofactor.

The enzyme catalyses 1D-myo-inositol 2-acetamido-2-deoxy-alpha-D-glucopyranoside + H2O = 1D-myo-inositol 2-amino-2-deoxy-alpha-D-glucopyranoside + acetate. Its function is as follows. Catalyzes the deacetylation of 1D-myo-inositol 2-acetamido-2-deoxy-alpha-D-glucopyranoside (GlcNAc-Ins) in the mycothiol biosynthesis pathway. The chain is 1D-myo-inositol 2-acetamido-2-deoxy-alpha-D-glucopyranoside deacetylase from Streptomyces avermitilis (strain ATCC 31267 / DSM 46492 / JCM 5070 / NBRC 14893 / NCIMB 12804 / NRRL 8165 / MA-4680).